Reading from the N-terminus, the 177-residue chain is Large ribosomal subunit protein uL6 (177 aa).

This sequence belongs to the universal ribosomal protein uL6 family. As to quaternary structure, part of the 50S ribosomal subunit.

Its function is as follows. This protein binds to the 23S rRNA, and is important in its secondary structure. It is located near the subunit interface in the base of the L7/L12 stalk, and near the tRNA binding site of the peptidyltransferase center. The protein is Large ribosomal subunit protein uL6 of Azorhizobium caulinodans (strain ATCC 43989 / DSM 5975 / JCM 20966 / LMG 6465 / NBRC 14845 / NCIMB 13405 / ORS 571).